A 395-amino-acid chain; its full sequence is Nuclear hormone receptor family member nhr-10 (395 aa).

The nuclear receptor DNA-binding region spans 15–90; it reads EEVCLVCSDI…VGMDRNAIQQ (76 aa). NR C4-type zinc fingers lie at residues 18–38 and 54–78; these read CLVCSDISTGYHYGVPSCNGC and CQFQGKCPVDKSIRCACRHCRFEKC. Residues 152–392 enclose the NR LBD domain; it reads PSRTLIEAVV…TFAKQLLFGI (241 aa).

It belongs to the nuclear hormone receptor family.

It localises to the nucleus. Its function is as follows. Probable transcription factor that acts in a feed-forward loop with nhr-68 to activate genes involved in the vitamin B12-independent breakdown of the short-chain fatty acid propionate. This pathway is triggered in response to a diet low in vitamin B12, when canonical vitamin B12-dependent propionate breakdown cannot function; the resulting accumulation of propionate is probably sensed by nhr-10 and/or nhr-68. The protein is Nuclear hormone receptor family member nhr-10 (nhr-10) of Caenorhabditis elegans.